Consider the following 644-residue polypeptide: Replication protein E1 (644 aa).

Residues 86–88 (KRK) carry the Nuclear localization signal motif. 2 positions are modified to phosphoserine; by host: S92 and S96. The interval 180 to 346 (VPTSPTNQLL…LTIIQHGVDD (167 aa)) is DNA-binding region. An SF3 helicase domain is found at 445–595 (VEFITFLCAL…LPFDKNRNPV (151 aa)). 471–478 (GPANTGKS) contributes to the ATP binding site. A Glycyl lysine isopeptide (Lys-Gly) (interchain with G-Cter in SUMO) cross-link involves residue K552.

It belongs to the papillomaviridae E1 protein family. Can form hexamers. Interacts with E2 protein; this interaction increases E1 DNA binding specificity. Interacts with host DNA polymerase subunit POLA2. Interacts with host single stranded DNA-binding protein RPA1. Interacts with host TOP1; this interaction stimulates the enzymatic activity of TOP1. Phosphorylated. Post-translationally, sumoylated.

It localises to the host nucleus. The enzyme catalyses Couples ATP hydrolysis with the unwinding of duplex DNA by translocating in the 3'-5' direction.. It catalyses the reaction ATP + H2O = ADP + phosphate + H(+). In terms of biological role, ATP-dependent DNA 3'-5' helicase required for initiation of viral DNA replication. It forms a complex with the viral E2 protein. The E1-E2 complex binds to the replication origin which contains binding sites for both proteins. During the initial step, a dimer of E1 interacts with a dimer of protein E2 leading to a complex that binds the viral origin of replication with high specificity. Then, a second dimer of E1 displaces the E2 dimer in an ATP-dependent manner to form the E1 tetramer. Following this, two E1 monomers are added to each half of the site, which results in the formation of two E1 trimers on the viral ori. Subsequently, two hexamers will be created. The double hexamer acts as a bi-directional helicase machinery and unwinds the viral DNA and then recruits the host DNA polymerase to start replication. This Human papillomavirus 59 protein is Replication protein E1.